The sequence spans 462 residues: uncharacterized protein (462 aa).

Residues D12, H14, D48, N81, H179, and H202 each contribute to the a divalent metal cation site. A coiled-coil region spans residues E258–K291.

The protein belongs to the metallophosphoesterase superfamily. A divalent metal cation is required as a cofactor.

This is an uncharacterized protein from Bacillus subtilis (strain 168).